The primary structure comprises 228 residues: Protein slowmo homolog (228 aa).

The region spanning 1–172 (MPLFETIKHT…TIIKVQKEAE (172 aa)) is the PRELI/MSF1 domain.

This sequence belongs to the slowmo family.

The sequence is that of Protein slowmo homolog (slmo) from Dictyostelium discoideum (Social amoeba).